Consider the following 407-residue polypeptide: S-adenosylmethionine synthase (407 aa).

ATP is bound at residue His19. Asp21 is a Mg(2+) binding site. A K(+)-binding site is contributed by Glu47. The L-methionine site is built by Glu60 and Gln103. Residues 103 to 113 (QSQEIADGVDN) are flexible loop. The segment at 107 to 134 (IADGVDNSDEARTNGDVEEDDRAGAGDQ) is disordered. ATP-binding positions include 178–180 (DGK), Asp258, 264–265 (RK), Ala281, and Lys285. Asp258 is an L-methionine binding site. Position 289 (Lys289) interacts with L-methionine.

Belongs to the AdoMet synthase family. In terms of assembly, homotetramer; dimer of dimers. It depends on Mg(2+) as a cofactor. K(+) is required as a cofactor.

Its subcellular location is the cytoplasm. The enzyme catalyses L-methionine + ATP + H2O = S-adenosyl-L-methionine + phosphate + diphosphate. Its pathway is amino-acid biosynthesis; S-adenosyl-L-methionine biosynthesis; S-adenosyl-L-methionine from L-methionine: step 1/1. Functionally, catalyzes the formation of S-adenosylmethionine (AdoMet) from methionine and ATP. The overall synthetic reaction is composed of two sequential steps, AdoMet formation and the subsequent tripolyphosphate hydrolysis which occurs prior to release of AdoMet from the enzyme. This is S-adenosylmethionine synthase from Corynebacterium glutamicum (strain ATCC 13032 / DSM 20300 / JCM 1318 / BCRC 11384 / CCUG 27702 / LMG 3730 / NBRC 12168 / NCIMB 10025 / NRRL B-2784 / 534).